The primary structure comprises 321 residues: Lipoyl synthase (321 aa).

[4Fe-4S] cluster is bound by residues C68, C73, C79, C94, C98, C101, and S308. Positions 80 to 297 (FNHGTATFMI…KELAESIGFT (218 aa)) constitute a Radical SAM core domain.

This sequence belongs to the radical SAM superfamily. Lipoyl synthase family. [4Fe-4S] cluster serves as cofactor.

The protein resides in the cytoplasm. It carries out the reaction [[Fe-S] cluster scaffold protein carrying a second [4Fe-4S](2+) cluster] + N(6)-octanoyl-L-lysyl-[protein] + 2 oxidized [2Fe-2S]-[ferredoxin] + 2 S-adenosyl-L-methionine + 4 H(+) = [[Fe-S] cluster scaffold protein] + N(6)-[(R)-dihydrolipoyl]-L-lysyl-[protein] + 4 Fe(3+) + 2 hydrogen sulfide + 2 5'-deoxyadenosine + 2 L-methionine + 2 reduced [2Fe-2S]-[ferredoxin]. Its pathway is protein modification; protein lipoylation via endogenous pathway; protein N(6)-(lipoyl)lysine from octanoyl-[acyl-carrier-protein]: step 2/2. In terms of biological role, catalyzes the radical-mediated insertion of two sulfur atoms into the C-6 and C-8 positions of the octanoyl moiety bound to the lipoyl domains of lipoate-dependent enzymes, thereby converting the octanoylated domains into lipoylated derivatives. This Shewanella pealeana (strain ATCC 700345 / ANG-SQ1) protein is Lipoyl synthase.